The following is a 252-amino-acid chain: MAVPEKSTKERLMSFLDDLEVLSRELIEMLALSRNQKLSQPGEENQILELLIQKDGEFQELMKVALSQGKIHQEMQVLEKEVEKRDSDIQQLQKQLKEAEHILATAVYQAKEKLKSIDKARKGAISSEELIKYAHRISASNAVCAPLTWVPGDPRRPYPTDLEMRSGLLGQMSNLPTNGVNGHLPGDALAAGRLPDVLAPQYPWQSNDMSMNMLPPNHSNEFLMESLGPNKENEEDVEVMSTDSSSSSSDSD.

Positions 70 to 112 (KIHQEMQVLEKEVEKRDSDIQQLQKQLKEAEHILATAVYQAKE) form a coiled coil. Residues 218–252 (HSNEFLMESLGPNKENEEDVEVMSTDSSSSSSDSD) form a disordered region. Positions 241-252 (STDSSSSSSDSD) are enriched in low complexity.

This sequence belongs to the Mediator complex subunit 4 family. In terms of assembly, component of the Mediator complex.

Its subcellular location is the nucleus. Functionally, component of the Mediator complex, a coactivator involved in the regulated transcription of nearly all RNA polymerase II-dependent genes. Mediator functions as a bridge to convey information from gene-specific regulatory proteins to the basal RNA polymerase II transcription machinery. Mediator is recruited to promoters by direct interactions with regulatory proteins and serves as a scaffold for the assembly of a functional preinitiation complex with RNA polymerase II and the general transcription factors. This chain is Mediator of RNA polymerase II transcription subunit 4 (med4), found in Xenopus tropicalis (Western clawed frog).